The sequence spans 792 residues: uncharacterized protein (792 aa).

A substrate-binding site is contributed by 361–362; it reads WD. Catalysis depends on Glu488, which acts as the Proton donor. Residue 590 to 591 coordinates substrate; that stretch reads KQ. The tract at residues 753–792 is disordered; it reads DSPSTIAVRDRKPLLPPPSQPPGREPVSRRHKSLIISAAR. Positions 766-776 are enriched in pro residues; sequence LLPPPSQPPGR.

Belongs to the glycosyl hydrolase 65 family.

This is an uncharacterized protein from Mycobacterium leprae (strain TN).